A 681-amino-acid chain; its full sequence is Spermatogenesis-associated protein 21 (681 aa).

Residues 1 to 14 (MENRNTHTHPESKA) show a composition bias toward basic and acidic residues. Disordered stretches follow at residues 1-284 (MENR…ANSR) and 298-336 (EEAT…VPTL). 2 stretches are compositionally biased toward polar residues: residues 83–94 (QEPSARPRTTQD) and 159–173 (PSNS…NSPS). Basic and acidic residues predominate over residues 251-261 (PEERDTEKKEL). Over residues 264-281 (GQKQRQQALSAAGTQGPA) the composition is skewed to polar residues. Residues 319 to 335 (TVTSVSTSGPISSSVPT) are compositionally biased toward low complexity. The EF-hand domain maps to 464–499 (FTPAQVEEALMSADVNGDGHVDFKDFLAVMTDTKRF). Ca(2+) is bound by residues D477, N479, D481, H483, and D488. Positions 653-681 (LFFQPGQQGSREHSSDSRKWLSSMPARTH) are disordered. Basic and acidic residues predominate over residues 662-671 (SREHSSDSRK).

Its function is as follows. Involved in the differentiation of haploid spermatids. The chain is Spermatogenesis-associated protein 21 (Spata21) from Mus musculus (Mouse).